The primary structure comprises 174 residues: MARLLRALRGLPWLEAPGRARGCAGSGRGDTGSLIKSKLSLSKADWQKKLTPEQFYVTREKGTEAPFSGMYLKNKETGMYHCVCCDSPLFSSEKKYCSGTGWPSFSEAHGTKGSDESHTGILRRLDTSLGCPRMEVVCKQCEAHLGHVFPDGPDPTGQRFCINSVALKFKPSKP.

A mitochondrion-targeting transit peptide spans 1–61 (MARLLRALRG…PEQFYVTREK (61 aa)). The MsrB domain maps to 62-172 (GTEAPFSGMY…NSVALKFKPS (111 aa)). Residues C82, C85, C138, and C141 each coordinate Zn(2+). The active-site Nucleophile is the C161.

Belongs to the MsrB Met sulfoxide reductase family. Zn(2+) serves as cofactor.

The protein localises to the mitochondrion. It carries out the reaction L-methionyl-[protein] + [thioredoxin]-disulfide + H2O = L-methionyl-(R)-S-oxide-[protein] + [thioredoxin]-dithiol. The enzyme catalyses [thioredoxin]-disulfide + L-methionine + H2O = L-methionine (R)-S-oxide + [thioredoxin]-dithiol. Its function is as follows. Methionine-sulfoxide reductase that specifically reduces methionine (R)-sulfoxide back to methionine. While in many cases, methionine oxidation is the result of random oxidation following oxidative stress, methionine oxidation is also a post-translational modification that takes place on specific residue. Upon oxidative stress, may play a role in the preservation of mitochondrial integrity by decreasing the intracellular reactive oxygen species build-up through its scavenging role, hence contributing to cell survival and protein maintenance. In Rattus norvegicus (Rat), this protein is Methionine-R-sulfoxide reductase B2, mitochondrial (Msrb2).